We begin with the raw amino-acid sequence, 554 residues long: MSEAEARPTNFIRQIIDEDLASGKHTTVHTRFPPEPNGYLHIGHAKSICLNFGIAQDYKGQCNLRFDDTNPVKEDIEYVDSIKNDVEWLGFHWSGNVRYSSDYFDQLHAYAIELINKGLAYVDELTPEQIREYRGTLTQPGKNSPYRDRSVEENLALFEKMRTGGFEEGKACLRAKIDMASPFIVMRDPVLYRIKFAEHHQTGNKWCIYPMYDFTHCISDALEGITHSLCTLEFQDNRRLYDWVLDNITIPVHPRQYEFSRLNLEYTVMSKRKLNLLVTDKHVEGWDDPRMPTISGLRRRGYTAASIREFCKRIGVTKQDNTIEMASLESCIREDLNENAPRAMAVIDPVKLVIENYQGEGEMVTMPNHPNKPEMGSRQVPFSGEIWIDRSDFREEANKQYKRLVLGKEVRLRNAYVIKAERVEKDAEGNITTIFCTYDADTLSKDPADGRKVKGVIHWVSAAHALPVEIRLYDRLFSVPNPGAADDFLSVINPESLVIKQGFAEPSLKDAVAGKAFQFEREGYFCLDSRHSTAEKPVFNRTVGLRDTWAKVGE.

Residues 34–44 (PEPNGYLHIGH) carry the 'HIGH' region motif. Residues 35–37 (EPN) and 41–47 (HIGHAKS) each bind ATP. Positions 67 and 212 each coordinate L-glutamine. ATP-binding positions include Thr231, 261–262 (RL), and 269–271 (MSK). The short motif at 268-272 (VMSKR) is the 'KMSKS' region element. The tract at residues 317-324 (TKQDNTIE) is interaction with tRNA.

The protein belongs to the class-I aminoacyl-tRNA synthetase family. In terms of assembly, monomer.

The protein resides in the cytoplasm. The catalysed reaction is tRNA(Gln) + L-glutamine + ATP = L-glutaminyl-tRNA(Gln) + AMP + diphosphate. The polypeptide is Glutamine--tRNA ligase (Escherichia coli O157:H7).